The following is a 185-amino-acid chain: Ribosome-recycling factor (185 aa).

The protein belongs to the RRF family.

Its subcellular location is the cytoplasm. In terms of biological role, responsible for the release of ribosomes from messenger RNA at the termination of protein biosynthesis. May increase the efficiency of translation by recycling ribosomes from one round of translation to another. In Nocardia farcinica (strain IFM 10152), this protein is Ribosome-recycling factor.